A 395-amino-acid chain; its full sequence is S-adenosylmethionine synthase (395 aa).

Residue histidine 15 coordinates ATP. Aspartate 17 contributes to the Mg(2+) binding site. Residue glutamate 43 coordinates K(+). Glutamate 56 and glutamine 99 together coordinate L-methionine. Positions 99–109 are flexible loop; that stretch reads QSADIALGVDE. ATP-binding positions include 174-176, 240-241, aspartate 249, 255-256, alanine 272, and lysine 276; these read DGK, RF, and RK. Aspartate 249 provides a ligand contact to L-methionine. L-methionine is bound at residue lysine 280.

It belongs to the AdoMet synthase family. As to quaternary structure, homotetramer; dimer of dimers. The cofactor is Mg(2+). K(+) serves as cofactor.

The protein localises to the cytoplasm. It carries out the reaction L-methionine + ATP + H2O = S-adenosyl-L-methionine + phosphate + diphosphate. It functions in the pathway amino-acid biosynthesis; S-adenosyl-L-methionine biosynthesis; S-adenosyl-L-methionine from L-methionine: step 1/1. Functionally, catalyzes the formation of S-adenosylmethionine (AdoMet) from methionine and ATP. The overall synthetic reaction is composed of two sequential steps, AdoMet formation and the subsequent tripolyphosphate hydrolysis which occurs prior to release of AdoMet from the enzyme. In Alkaliphilus oremlandii (strain OhILAs) (Clostridium oremlandii (strain OhILAs)), this protein is S-adenosylmethionine synthase.